The chain runs to 107 residues: UPF0060 membrane protein glr4174 (107 aa).

4 helical membrane-spanning segments follow: residues 1 to 21 (MALL…FAFW), 26 to 46 (LGKN…FAWL), 58 to 78 (AYAA…WLVE), and 87 to 107 (LAGA…DRSP).

Belongs to the UPF0060 family.

The protein resides in the cell inner membrane. In Gloeobacter violaceus (strain ATCC 29082 / PCC 7421), this protein is UPF0060 membrane protein glr4174.